The primary structure comprises 128 residues: Large ribosomal subunit protein bL12 (128 aa).

It belongs to the bacterial ribosomal protein bL12 family. Homodimer. Part of the ribosomal stalk of the 50S ribosomal subunit. Forms a multimeric L10(L12)X complex, where L10 forms an elongated spine to which 2 to 4 L12 dimers bind in a sequential fashion. Binds GTP-bound translation factors.

Functionally, forms part of the ribosomal stalk which helps the ribosome interact with GTP-bound translation factors. Is thus essential for accurate translation. The protein is Large ribosomal subunit protein bL12 of Corynebacterium aurimucosum (strain ATCC 700975 / DSM 44827 / CIP 107346 / CN-1) (Corynebacterium nigricans).